The primary structure comprises 240 residues: Biotin--[acetyl-CoA-carboxylase] ligase (240 aa).

The 176-residue stretch at 1 to 176 folds into the BPL/LPL catalytic domain; the sequence is MLARTDSTNA…AFARWQAQLD (176 aa). Residues 7–9, Gln30, 34–36, and Lys102 each bind biotin; these read STN and RGR.

The protein belongs to the biotin--protein ligase family.

The enzyme catalyses biotin + L-lysyl-[protein] + ATP = N(6)-biotinyl-L-lysyl-[protein] + AMP + diphosphate + H(+). In terms of biological role, activates biotin to form biotinyl-5'-adenylate and transfers the biotin moiety to biotin-accepting proteins. This is Biotin--[acetyl-CoA-carboxylase] ligase (birA) from Paracoccus denitrificans.